A 228-amino-acid polypeptide reads, in one-letter code: Carbonic anhydrase (228 aa).

Positions 56, 58, 112, and 115 each coordinate Zn(2+).

Belongs to the beta-class carbonic anhydrase family. The cofactor is Zn(2+).

It catalyses the reaction hydrogencarbonate + H(+) = CO2 + H2O. Functionally, catalyzes the reversible hydration of CO(2) to H(2)CO(3). The main role may be to provide inorganic carbon for the bicarbonate-dependent carboxylation reactions catalyzed by pyruvate carboxylase, acetyl-CoA carboxylase and carbamoyl-phosphate synthetase. Involved in osmoadaptation. This is Carbonic anhydrase from Emericella nidulans (strain FGSC A4 / ATCC 38163 / CBS 112.46 / NRRL 194 / M139) (Aspergillus nidulans).